The primary structure comprises 337 residues: Anthranilate phosphoribosyltransferase (337 aa).

Residues Gly81, 84-85 (GD), Ser89, 91-94 (NVST), 109-117 (KHGNRALSS), and Ala121 contribute to the 5-phospho-alpha-D-ribose 1-diphosphate site. Gly81 contacts anthranilate. Ser93 serves as a coordination point for Mg(2+). Asn112 is an anthranilate binding site. Arg167 is a binding site for anthranilate. Residues Asp226 and Glu227 each coordinate Mg(2+).

This sequence belongs to the anthranilate phosphoribosyltransferase family. In terms of assembly, homodimer. It depends on Mg(2+) as a cofactor.

The catalysed reaction is N-(5-phospho-beta-D-ribosyl)anthranilate + diphosphate = 5-phospho-alpha-D-ribose 1-diphosphate + anthranilate. It participates in amino-acid biosynthesis; L-tryptophan biosynthesis; L-tryptophan from chorismate: step 2/5. Catalyzes the transfer of the phosphoribosyl group of 5-phosphorylribose-1-pyrophosphate (PRPP) to anthranilate to yield N-(5'-phosphoribosyl)-anthranilate (PRA). The chain is Anthranilate phosphoribosyltransferase from Bradyrhizobium sp. (strain BTAi1 / ATCC BAA-1182).